A 371-amino-acid chain; its full sequence is 2-aminoethylphosphonate--pyruvate transaminase (371 aa).

Lysine 195 is subject to N6-(pyridoxal phosphate)lysine.

This sequence belongs to the class-V pyridoxal-phosphate-dependent aminotransferase family. PhnW subfamily. In terms of assembly, homodimer. Pyridoxal 5'-phosphate serves as cofactor.

It carries out the reaction (2-aminoethyl)phosphonate + pyruvate = phosphonoacetaldehyde + L-alanine. Functionally, involved in phosphonate degradation. This Pseudomonas aeruginosa (strain UCBPP-PA14) protein is 2-aminoethylphosphonate--pyruvate transaminase.